An 85-amino-acid chain; its full sequence is Large ribosomal subunit protein bL31B (85 aa).

Belongs to the bacterial ribosomal protein bL31 family. Type B subfamily. In terms of assembly, part of the 50S ribosomal subunit.

The sequence is that of Large ribosomal subunit protein bL31B from Bifidobacterium longum subsp. infantis (strain ATCC 15697 / DSM 20088 / JCM 1222 / NCTC 11817 / S12).